The chain runs to 129 residues: Large ribosomal subunit protein bL12c (129 aa).

Belongs to the bacterial ribosomal protein bL12 family. In terms of assembly, homodimer. Part of the ribosomal stalk of the 50S ribosomal subunit. Forms a multimeric L10(L12)X complex, where L10 forms an elongated spine to which 2 to 4 L12 dimers bind in a sequential fashion. Binds GTP-bound translation factors.

It is found in the plastid. Its subcellular location is the chloroplast. In terms of biological role, forms part of the ribosomal stalk which helps the ribosome interact with GTP-bound translation factors. Is thus essential for accurate translation. The chain is Large ribosomal subunit protein bL12c from Porphyra purpurea (Red seaweed).